The primary structure comprises 415 residues: DNA polymerase IV (415 aa).

The 182-residue stretch at 15–196 (ILHVDMNCFF…LPVGAMHGIG (182 aa)) folds into the UmuC domain. 2 residues coordinate Mg(2+): aspartate 19 and aspartate 115. Glutamate 116 is an active-site residue. A disordered region spans residues 238-260 (KGMDDRQVDPSQMGQHKSVGNSM). Polar residues predominate over residues 246 to 260 (DPSQMGQHKSVGNSM).

The protein belongs to the DNA polymerase type-Y family. As to quaternary structure, monomer. Mg(2+) is required as a cofactor.

The protein resides in the cytoplasm. It catalyses the reaction DNA(n) + a 2'-deoxyribonucleoside 5'-triphosphate = DNA(n+1) + diphosphate. Its function is as follows. Poorly processive, error-prone DNA polymerase involved in untargeted mutagenesis. Copies undamaged DNA at stalled replication forks, which arise in vivo from mismatched or misaligned primer ends. These misaligned primers can be extended by PolIV. Exhibits no 3'-5' exonuclease (proofreading) activity. May be involved in translesional synthesis, in conjunction with the beta clamp from PolIII. This Bacillus cereus (strain ZK / E33L) protein is DNA polymerase IV.